A 126-amino-acid polypeptide reads, in one-letter code: Large ribosomal subunit protein bL12 (126 aa).

Belongs to the bacterial ribosomal protein bL12 family. In terms of assembly, homodimer. Part of the ribosomal stalk of the 50S ribosomal subunit. Forms a multimeric L10(L12)X complex, where L10 forms an elongated spine to which 2 to 4 L12 dimers bind in a sequential fashion. Binds GTP-bound translation factors.

Functionally, forms part of the ribosomal stalk which helps the ribosome interact with GTP-bound translation factors. Is thus essential for accurate translation. The sequence is that of Large ribosomal subunit protein bL12 from Tropheryma whipplei (strain TW08/27) (Whipple's bacillus).